Reading from the N-terminus, the 316-residue chain is MAVQVVQAVQAVHLESDAFLVCLNHALSTEKEEVMGLCIGELNDDLRNDPKFTYTGTEMRTVAEKVDTVRIVHIHSVIILRRSDKRKDRVEISPEQLSAASTEAERLAELTGRPMRVVGWYHSHPHITVWPSHVDVRTQAMYQMMDQGFVGLIFSCFIEDKNTKTGRVLYTCFQSIQAQKSSESPRGPRDFWSSSQHISIEGQKEEERYERIEIPIHIVPHVTIGKVCLESAVELPKILCQEEQDAYRRIHSLTHLDSVTKIHNGSVFTKNLCSQMSAVSGPLLQWLEDRLEQNQQHVQELQQEKEELLQELSSLE.

Ala2 is subject to N-acetylalanine. An MPN domain is found at Val12–Gln179. Positions 122, 124, and 135 each coordinate Zn(2+). A JAMM motif motif is present at residues His122–Asp135. Ser258 bears the Phosphoserine mark.

It belongs to the peptidase M67A family. BRCC36 subfamily. Component of the ARISC complex, at least composed of UIMC1/RAP80, ABRAXAS1, BRCC3/BRCC36, BABAM2 and BABAM1/NBA1. Component of the BRCA1-A complex, at least composed of BRCA1, BARD1, UIMC1/RAP80, ABRAXAS1, BRCC3/BRCC36, BABAM2 and BABAM1/NBA1. In the BRCA1-A complex, interacts directly with ABRAXAS1 and BABAM2. Component of the BRISC complex, at least composed of ABRAXAS2, BRCC3/BRCC36, BABAM2 and BABAM1/NBA1. Identified in a complex with SHMT2 and the other subunits of the BRISC complex. In the BRISC complex, interacts directly with ABRAXAS2. Identified in a complex with ABRAXAS2 and NUMA1. The BRISC complex interacts with the CSN complex. Component of the BRCA1/BRCA2 containing complex (BRCC), which also contains BRCA1, BRCA2, BARD1, BABAM2 and RAD51. BRCC is a ubiquitin E3 ligase complex that enhances cellular survival following DNA damage. Interacts with BRCA1. Binds polyubiquitin. Interacts with PWWP2B. Interacts with HDAC1; this interaction is enhanced in the presence of PWWP2B. Zn(2+) serves as cofactor.

It localises to the nucleus. Its subcellular location is the cytoplasm. The protein resides in the cytoskeleton. The protein localises to the spindle pole. Metalloprotease that specifically cleaves 'Lys-63'-linked polyubiquitin chains. Does not have activity toward 'Lys-48'-linked polyubiquitin chains. Component of the BRCA1-A complex, a complex that specifically recognizes 'Lys-63'-linked ubiquitinated histones H2A and H2AX at DNA lesions sites, leading to target the BRCA1-BARD1 heterodimer to sites of DNA damage at double-strand breaks (DSBs). In the BRCA1-A complex, it specifically removes 'Lys-63'-linked ubiquitin on histones H2A and H2AX, antagonizing the RNF8-dependent ubiquitination at double-strand breaks (DSBs). Catalytic subunit of the BRISC complex, a multiprotein complex that specifically cleaves 'Lys-63'-linked ubiquitin in various substrates. Mediates the specific 'Lys-63'-specific deubiquitination associated with the COP9 signalosome complex (CSN), via the interaction of the BRISC complex with the CSN complex. The BRISC complex is required for normal mitotic spindle assembly and microtubule attachment to kinetochores via its role in deubiquitinating NUMA1. Plays a role in interferon signaling via its role in the deubiquitination of the interferon receptor IFNAR1; deubiquitination increases IFNAR1 activity by enhancing its stability and cell surface expression. Acts as a regulator of the NLRP3 inflammasome by mediating deubiquitination of NLRP3, leading to NLRP3 inflammasome assembly. Down-regulates the response to bacterial lipopolysaccharide (LPS) via its role in IFNAR1 deubiquitination. Deubiquitinates HDAC1 and PWWP2B leading to their stabilization. In Bos taurus (Bovine), this protein is Lys-63-specific deubiquitinase BRCC36 (BRCC3).